The primary structure comprises 175 residues: Interleukin-10 (175 aa).

Residues 1–21 (MQTCCQALLLLLAACTLPAHC) form the signal peptide. Intrachain disulfides connect C26–C123 and C77–C129.

The protein belongs to the IL-10 family. As to quaternary structure, homodimer. Interacts with IL10RA and IL10RB. As to expression, expressed predominantly in bursa of Fabricius and cecal tonsils with low levels in thymus, liver and lung.

The protein localises to the secreted. Its function is as follows. Major immune regulatory cytokine that acts on many cells of the immune system where it has profound anti-inflammatory functions, limiting excessive tissue disruption caused by inflammation. Mechanistically, IL10 binds to its heterotetrameric receptor comprising IL10RA and IL10RB leading to JAK1 and STAT2-mediated phosphorylation of STAT3. In turn, STAT3 translocates to the nucleus where it drives expression of anti-inflammatory mediators. Targets antigen-presenting cells (APCs) such as macrophages and monocytes and inhibits their release of pro-inflammatory cytokines including granulocyte-macrophage colony-stimulating factor /GM-CSF, granulocyte colony-stimulating factor/G-CSF, IL-1 alpha, IL-1 beta, IL-6, IL-8 and TNF-alpha. Also interferes with antigen presentation by reducing the expression of MHC-class II and co-stimulatory molecules, thereby inhibiting their ability to induce T cell activation. In addition, controls the inflammatory response of macrophages by reprogramming essential metabolic pathways including mTOR signaling. The polypeptide is Interleukin-10 (Gallus gallus (Chicken)).